The primary structure comprises 301 residues: Mitochondrial ornithine transporter 1 (301 aa).

The next 6 helical transmembrane spans lie at 5–25, 68–88, 110–130, 168–188, 207–227, and 237–257; these read PAIQAAIDLTAGAAGGTACVL, SPALIANIAENSVLFMCYGFC, AAAGSFASAFAALVLCPTELV, GFYHGLSSTLLREVPGYFFFF, LGPIPLMLSGGFGGICLWLAV, and IQVLSMTGKQTGLIRTFLSIV. Solcar repeat units follow at residues 7–91, 104–197, and 207–293; these read IQAA…CQQV, LSDL…SRSF, and LGPI…SRKL.

This sequence belongs to the mitochondrial carrier (TC 2.A.29) family. As to expression, expressed in the liver (at protein level).

It localises to the mitochondrion inner membrane. The protein localises to the mitochondrion membrane. It carries out the reaction L-citrulline(in) + L-ornithine(out) + H(+)(in) = L-citrulline(out) + L-ornithine(in) + H(+)(out). The enzyme catalyses L-ornithine(in) + L-arginine(out) = L-ornithine(out) + L-arginine(in). The catalysed reaction is L-ornithine(out) + L-lysine(in) = L-ornithine(in) + L-lysine(out). It catalyses the reaction L-ornithine(out) + H(+)(in) = L-ornithine(in) + H(+)(out). It carries out the reaction L-lysine(out) + H(+)(in) = L-lysine(in) + H(+)(out). Inhibited by pyridoxal 5'-phosphate as well as by mercurials (mersalyl, p-chloromercuribenzene sulfonate, and mercuric chloride), N-ethylmaleimide and spermine. Its function is as follows. Mitochondrial ornithine-citrulline antiporter. Catalyzes the exchange between cytosolic ornithine and mitochondrial citrulline plus an H(+), the proton compensates the positive charge of ornithine thus leading to an electroneutral transport. Plays a crucial role in the urea cycle, by connecting the cytosolic and the intramitochondrial reactions of the urea cycle. Lysine and arginine are also transported by the antiport mechanism. In addition, catalyzes an electroneutral exchange of ornithine or lysine for H(+), a reaction driven by the pH gradient across the inner membrane. The polypeptide is Mitochondrial ornithine transporter 1 (Slc25a15) (Rattus norvegicus (Rat)).